Reading from the N-terminus, the 489-residue chain is Glutamate--tRNA ligase (489 aa).

The 'HIGH' region motif lies at 10 to 20 (PSPTGFLHIGG). The 'KMSKS' region motif lies at 261–265 (KLSKR). Position 264 (K264) interacts with ATP.

It belongs to the class-I aminoacyl-tRNA synthetase family. Glutamate--tRNA ligase type 1 subfamily. As to quaternary structure, monomer.

The protein localises to the cytoplasm. The catalysed reaction is tRNA(Glu) + L-glutamate + ATP = L-glutamyl-tRNA(Glu) + AMP + diphosphate. Catalyzes the attachment of glutamate to tRNA(Glu) in a two-step reaction: glutamate is first activated by ATP to form Glu-AMP and then transferred to the acceptor end of tRNA(Glu). The protein is Glutamate--tRNA ligase of Finegoldia magna (strain ATCC 29328 / DSM 20472 / WAL 2508) (Peptostreptococcus magnus).